Here is a 487-residue protein sequence, read N- to C-terminus: Glutamyl-tRNA(Gln) amidotransferase subunit A (487 aa).

Catalysis depends on charge relay system residues K77 and S152. Residue S176 is the Acyl-ester intermediate of the active site.

This sequence belongs to the amidase family. GatA subfamily. Heterotrimer of A, B and C subunits.

It carries out the reaction L-glutamyl-tRNA(Gln) + L-glutamine + ATP + H2O = L-glutaminyl-tRNA(Gln) + L-glutamate + ADP + phosphate + H(+). Allows the formation of correctly charged Gln-tRNA(Gln) through the transamidation of misacylated Glu-tRNA(Gln) in organisms which lack glutaminyl-tRNA synthetase. The reaction takes place in the presence of glutamine and ATP through an activated gamma-phospho-Glu-tRNA(Gln). This is Glutamyl-tRNA(Gln) amidotransferase subunit A from Lactiplantibacillus plantarum (strain ATCC BAA-793 / NCIMB 8826 / WCFS1) (Lactobacillus plantarum).